We begin with the raw amino-acid sequence, 345 residues long: GTPase Obg (345 aa).

In terms of domain architecture, Obg spans 1–159; sequence MRFIDEASIT…FHLKLELKLL (159 aa). The OBG-type G domain maps to 160-329; the sequence is ADVGIVGLPN…LIQILARQIA (170 aa). GTP is bound by residues 166-173, 191-195, 213-216, 283-286, and 310-312; these read GLPNAGKS, FTTLT, DIPG, NKID, and SAA. The Mg(2+) site is built by Ser173 and Thr193.

This sequence belongs to the TRAFAC class OBG-HflX-like GTPase superfamily. OBG GTPase family. As to quaternary structure, monomer. The cofactor is Mg(2+).

Its subcellular location is the cytoplasm. An essential GTPase which binds GTP, GDP and possibly (p)ppGpp with moderate affinity, with high nucleotide exchange rates and a fairly low GTP hydrolysis rate. Plays a role in control of the cell cycle, stress response, ribosome biogenesis and in those bacteria that undergo differentiation, in morphogenesis control. The polypeptide is GTPase Obg (Desulforapulum autotrophicum (strain ATCC 43914 / DSM 3382 / VKM B-1955 / HRM2) (Desulfobacterium autotrophicum)).